A 21-amino-acid chain; its full sequence is Cyanophlyctin (21 aa).

In terms of tissue distribution, expressed by the skin glands.

The protein localises to the secreted. In terms of biological role, has antibacterial activity against E.coli HP101BA (MIC=6.4 uM), K.pneumoniae PTCC1388 (MIC=7.3 uM), M.luteus PTCC1625 (MIC=4.7 uM) and S.aureus PTCC1431 (MIC=5.3 uM). Has no or very limited (&lt;3%) hemolytic activity at concentrations of 15 ug/ml and 60 ug/ml, respectively. The sequence is that of Cyanophlyctin from Euphlyctis cyanophlyctis (Skittering frog).